Consider the following 423-residue polypeptide: Aspartate--tRNA(Asp) ligase (423 aa).

Glu-163 contributes to the L-aspartate binding site. Residues 185-188 (QLYK) are aspartate. Arg-207 serves as a coordination point for L-aspartate. ATP-binding positions include 207 to 209 (RAE), 215 to 217 (RHL), and Glu-346. Mg(2+) is bound by residues Glu-346 and Ser-349. Ser-349 and Arg-353 together coordinate L-aspartate. 394–397 (GLER) contacts ATP.

This sequence belongs to the class-II aminoacyl-tRNA synthetase family. Type 2 subfamily. In terms of assembly, homodimer. It depends on Mg(2+) as a cofactor.

It is found in the cytoplasm. It catalyses the reaction tRNA(Asp) + L-aspartate + ATP = L-aspartyl-tRNA(Asp) + AMP + diphosphate. Its function is as follows. Catalyzes the attachment of L-aspartate to tRNA(Asp) in a two-step reaction: L-aspartate is first activated by ATP to form Asp-AMP and then transferred to the acceptor end of tRNA(Asp). In Picrophilus torridus (strain ATCC 700027 / DSM 9790 / JCM 10055 / NBRC 100828 / KAW 2/3), this protein is Aspartate--tRNA(Asp) ligase.